A 202-amino-acid polypeptide reads, in one-letter code: Dephospho-CoA kinase (202 aa).

Positions 5 to 202 (IVGLTGGIAS…DADYRARSDR (198 aa)) constitute a DPCK domain. Position 13–18 (13–18 (ASGKSA)) interacts with ATP.

The protein belongs to the CoaE family.

The protein resides in the cytoplasm. The enzyme catalyses 3'-dephospho-CoA + ATP = ADP + CoA + H(+). The protein operates within cofactor biosynthesis; coenzyme A biosynthesis; CoA from (R)-pantothenate: step 5/5. Its function is as follows. Catalyzes the phosphorylation of the 3'-hydroxyl group of dephosphocoenzyme A to form coenzyme A. The polypeptide is Dephospho-CoA kinase (Xanthomonas oryzae pv. oryzae (strain MAFF 311018)).